Consider the following 146-residue polypeptide: Angiogenin (146 aa).

A signal peptide spans 1–24 (MVMGLGLFLLVFMLGLGLTPPTLA). Gln25 bears the Pyrrolidone carboxylic acid mark. His37 serves as the catalytic Proton acceptor. Arg45 contributes to the tRNA binding site. Disulfide bonds link Cys50-Cys105, Cys63-Cys116, and Cys81-Cys131. The Nucleolar localization signal motif lies at 55–59 (RRRHL). TRNA contacts are provided by Cys105 and Ile127. The active-site Proton donor is the His138.

The protein belongs to the pancreatic ribonuclease family. Homodimer. Interacts with RNH1; inhibiting ANG ribonuclease activity. Interacts with PCNA.

Its subcellular location is the secreted. It is found in the nucleus. It localises to the nucleolus. The protein resides in the cytoplasm. The protein localises to the stress granule. Its activity is regulated as follows. Has weak tRNA ribonuclease activity by itself due to partial autoinhibition by its C-terminus, which folds into a short alpha-helix that partially occludes the substrate-binding site. In absence of stress, the ribonuclease activity is inhibited by RNH1 in the cytoplasm. In response to stress, dissociates from RNH1 in the cytoplasm and associates with cytoplasmic ribosomes with vacant A-sites: ribosomes directly activate the tRNA ribonuclease activity of ANG by refolding the C-terminal alpha-helix. In response to stress, the angiogenic activity of ANG is inhibited by RNH1 in the nucleus. Secreted ribonuclease that can either promote or restrict cell proliferation of target cells, depending on the context. Endocytosed in target cells via its receptor PLXNB2 and translocates to the cytoplasm or nucleus. Under stress conditions, localizes to the cytoplasm and promotes the assembly of stress granules (SGs): specifically cleaves a subset of tRNAs within anticodon loops to produce tRNA-derived stress-induced fragments (tiRNAs), resulting in translation repression and inhibition of cell proliferation. tiRNas also prevent formation of apoptosome, thereby promoting cell survival. Preferentially cleaves RNAs between a pyrimidine and an adenosine residue, suggesting that it cleaves the anticodon loop of tRNA(Ala) (32-UUAGCAU-38) after positions 33 and 36. Cleaves a subset of tRNAs, including tRNA(Ala), tRNA(Glu), tRNA(Gly), tRNA(Lys), tRNA(Val), tRNA(His), tRNA(Asp) and tRNA(Sec). Under growth conditions and in differentiated cells, translocates to the nucleus and stimulates ribosomal RNA (rRNA) transcription, including that containing the initiation site sequences of 45S rRNA, thereby promoting cell growth and proliferation. Angiogenin induces vascularization of normal and malignant tissues via its ability to promote rRNA transcription. Involved in hematopoietic stem and progenitor cell (HSPC) growth and survival by promoting rRNA transcription in growth conditions and inhibiting translation in response to stress, respectively. Mediates the crosstalk between myeloid and intestinal epithelial cells to protect the intestinal epithelial barrier integrity: secreted by myeloid cells and promotes intestinal epithelial cells proliferation and survival. Also mediates osteoclast-endothelial cell crosstalk in growing bone: produced by osteoclasts and protects the neighboring vascular cells against senescence by promoting rRNA transcription. This Chlorocebus aethiops (Green monkey) protein is Angiogenin (ANG).